A 453-amino-acid polypeptide reads, in one-letter code: Ribulose bisphosphate carboxylase large chain (453 aa).

A propeptide spanning residues 1–2 is cleaved from the precursor; it reads MS. Pro3 carries the N-acetylproline modification. Lys14 bears the N6,N6,N6-trimethyllysine mark. Substrate contacts are provided by Asn123 and Thr173. The Proton acceptor role is filled by Lys175. Residue Lys177 participates in substrate binding. Positions 201, 203, and 204 each coordinate Mg(2+). N6-carboxylysine is present on Lys201. Residue His294 is the Proton acceptor of the active site. Residues Arg295, His327, and Ser379 each coordinate substrate.

The protein belongs to the RuBisCO large chain family. Type I subfamily. In terms of assembly, heterohexadecamer of 8 large chains and 8 small chains; disulfide-linked. The disulfide link is formed within the large subunit homodimers. Mg(2+) serves as cofactor. In terms of processing, the disulfide bond which can form in the large chain dimeric partners within the hexadecamer appears to be associated with oxidative stress and protein turnover.

It is found in the plastid. The protein localises to the chloroplast. The catalysed reaction is 2 (2R)-3-phosphoglycerate + 2 H(+) = D-ribulose 1,5-bisphosphate + CO2 + H2O. It catalyses the reaction D-ribulose 1,5-bisphosphate + O2 = 2-phosphoglycolate + (2R)-3-phosphoglycerate + 2 H(+). In terms of biological role, ruBisCO catalyzes two reactions: the carboxylation of D-ribulose 1,5-bisphosphate, the primary event in carbon dioxide fixation, as well as the oxidative fragmentation of the pentose substrate in the photorespiration process. Both reactions occur simultaneously and in competition at the same active site. The protein is Ribulose bisphosphate carboxylase large chain of Valantia muralis (Wall valantia).